The primary structure comprises 347 residues: ATPase GET3 (347 aa).

26–33 lines the ATP pocket; it reads KGGVGKTT. The active site involves Asp57. The ATP site is built by Glu241 and Asn268. Zn(2+)-binding residues include Cys279 and Cys282.

Belongs to the arsA ATPase family. As to quaternary structure, homodimer. Component of the Golgi to ER traffic (GET) complex, which is composed of GET1, GET2 and GET3. Within the complex, GET1 and GET2 form a heterotetramer which is stabilized by phosphatidylinositol binding and which binds to the GET3 homodimer. Interacts with the chloride channel protein GEF1.

It localises to the cytoplasm. The protein resides in the endoplasmic reticulum. It is found in the golgi apparatus. In terms of biological role, ATPase required for the post-translational delivery of tail-anchored (TA) proteins to the endoplasmic reticulum. Recognizes and selectively binds the transmembrane domain of TA proteins in the cytosol. This complex then targets to the endoplasmic reticulum by membrane-bound receptors GET1 and GET2, where the tail-anchored protein is released for insertion. This process is regulated by ATP binding and hydrolysis. ATP binding drives the homodimer towards the closed dimer state, facilitating recognition of newly synthesized TA membrane proteins. ATP hydrolysis is required for insertion. Subsequently, the homodimer reverts towards the open dimer state, lowering its affinity for the GET1-GET2 receptor, and returning it to the cytosol to initiate a new round of targeting. Cooperates with the HDEL receptor ERD2 to mediate the ATP-dependent retrieval of resident ER proteins that contain a C-terminal H-D-E-L retention signal from the Golgi to the ER. Involved in low-level resistance to the oxyanions arsenite and arsenate, and in heat tolerance. This chain is ATPase GET3, found in Meyerozyma guilliermondii (strain ATCC 6260 / CBS 566 / DSM 6381 / JCM 1539 / NBRC 10279 / NRRL Y-324) (Yeast).